Consider the following 422-residue polypeptide: Histidine--tRNA ligase (422 aa).

Belongs to the class-II aminoacyl-tRNA synthetase family. As to quaternary structure, homodimer.

The protein localises to the cytoplasm. It catalyses the reaction tRNA(His) + L-histidine + ATP = L-histidyl-tRNA(His) + AMP + diphosphate + H(+). This is Histidine--tRNA ligase from Aliivibrio fischeri (strain ATCC 700601 / ES114) (Vibrio fischeri).